We begin with the raw amino-acid sequence, 342 residues long: MKQLESFEIPRTVIFGPGAISKTPQVVAKHKAERILIISGKSVTANYANEVAHLLSGYSVDVVRYDEVDTSYSKYDLVLGVGGGRPIDVAKVYSYLHRAPLIVIPTSASHDGIASPYVSYALSQKMASHGKIVASPIAIIADTTVILNAPSRLLKAGIGDLLGKIVAVRDWQLAHRLKGEEYSEYAAHLALTSYRIVVSNAFRIKNFTKEEDVRVLVKALIGCGVAMGIAGSSRPCSGSEHLFAHAVELLLGEKNNEAIHGELVALGTVVMAYLHGMNWRRIKRVAKEVGLPTTLKQIGIDADVAIEALTTAHTLRPDRYTILGSGLGKEAARRALETTELI.

Residues 84–88 and 106–109 contribute to the NAD(+) site; these read GRPID and TSAS. Residue D111 coordinates substrate. S115 lines the NAD(+) pocket. Residue D160 participates in substrate binding. Positions 160 and 241 each coordinate Zn(2+). H245 contributes to the substrate binding site. H260 contributes to the Zn(2+) binding site.

It belongs to the glycerol-1-phosphate dehydrogenase family. As to quaternary structure, homodimer. It depends on Zn(2+) as a cofactor.

The protein resides in the cytoplasm. It carries out the reaction sn-glycerol 1-phosphate + NAD(+) = dihydroxyacetone phosphate + NADH + H(+). The enzyme catalyses sn-glycerol 1-phosphate + NADP(+) = dihydroxyacetone phosphate + NADPH + H(+). The protein operates within membrane lipid metabolism; glycerophospholipid metabolism. Functionally, catalyzes the NAD(P)H-dependent reduction of dihydroxyacetonephosphate (DHAP or glycerone phosphate) to glycerol 1-phosphate (G1P). The G1P thus generated is used as the glycerophosphate backbone of phospholipids in the cellular membranes of Archaea. The protein is Glycerol-1-phosphate dehydrogenase [NAD(P)+] of Pyrobaculum arsenaticum (strain DSM 13514 / JCM 11321 / PZ6).